We begin with the raw amino-acid sequence, 307 residues long: tRNA N(3)-methylcytidine methyltransferase trm140 (307 aa).

7 residues coordinate S-adenosyl-L-methionine: W83, Y87, G125, D150, D176, L177, and I197.

This sequence belongs to the methyltransferase superfamily. METL family.

The enzyme catalyses cytidine(32) in tRNA(Thr) + S-adenosyl-L-methionine = N(3)-methylcytidine(32) in tRNA(Thr) + S-adenosyl-L-homocysteine + H(+). S-adenosyl-L-methionine-dependent methyltransferase that mediates N(3)-methylcytidine modification of residue 32 of the tRNA anticodon loop of tRNA(Thr). Does not catalyze N(3)-methylcytidine modification of tRNA(Ser). The sequence is that of tRNA N(3)-methylcytidine methyltransferase trm140 from Schizosaccharomyces pombe (strain 972 / ATCC 24843) (Fission yeast).